The sequence spans 322 residues: Mitochondrial glutamate carrier 1 (322 aa).

3 Solcar repeats span residues 6–93, 101–214, and 223–312; these read ISLP…FRYQ, LTLF…LNEL, and SPFY…GIAE. 6 helical membrane passes run 12-32, 62-82, 107-127, 189-209, 223-243, and 292-312; these read LING…IDLA, YFGM…EKAI, MLAG…MEML, GLGA…PLFA, SPFY…AVAV, and ALVI…GIAE.

Belongs to the mitochondrial carrier (TC 2.A.29) family.

It localises to the mitochondrion inner membrane. It catalyses the reaction L-glutamate(in) + H(+)(in) = L-glutamate(out) + H(+)(out). Mitochondrial glutamate/H(+) symporter. Responsible for the transport of glutamate from the cytosol into the mitochondrial matrix with the concomitant import of a proton. Plays a role in the control of glucose-stimulated insulin secretion. In Bos taurus (Bovine), this protein is Mitochondrial glutamate carrier 1 (SLC25A22).